Here is a 506-residue protein sequence, read N- to C-terminus: MTQAVMLQGTASDVGKSVLAAGLCRIFYQDGLRTAPFKSQNMALNSGITPDGKEMGRAQIFQAEAAGITPDVRMNPVLLKPTSDRQAQVVLMGKVATNMDAVSYHDYKPRLREQILAVYNSLAQEYDVIVLEGAGSPAEINLRDRDIVNMGMAEMAQCPVILVADIDRGGVFAAIYGTLALLHKQERDRVKGVIINKFRGDVALLYSGIEQIESLTGVPVLGVMPWLDVDLEDEDGVALQNDKYRGNAPRDITIAIVQLPHISNFTDFNALAAQPDVRIRYIRRPEALTDADLVILPGSKNTLSDLAWLRESGMADAVLQTHRQGVPVMGICGGYQMLGDTIVDEVESGLGTQPGLGLLNAITRFAQDKTTTQVNATMSGELPGWLAAAAGLPVRGYEIHMGETVLQEGCCTAMTLQKNGCSVADGAVTADGLAFGTYLHGLFDSDAFTRAVVNGLRARKGLTPWETTFCYAEHKARQFDLLAEAMRQHIDIDKIYTIMQQHQEPV.

In terms of domain architecture, GATase cobBQ-type spans 251–448; that stretch reads DITIAIVQLP…LHGLFDSDAF (198 aa). Residue Cys-332 is the Nucleophile of the active site. Residue His-440 is part of the active site.

It belongs to the CobB/CobQ family. CobQ subfamily.

It functions in the pathway cofactor biosynthesis; adenosylcobalamin biosynthesis. Its function is as follows. Catalyzes amidations at positions B, D, E, and G on adenosylcobyrinic A,C-diamide. NH(2) groups are provided by glutamine, and one molecule of ATP is hydrogenolyzed for each amidation. In Salmonella agona (strain SL483), this protein is Cobyric acid synthase.